The primary structure comprises 296 residues: Protein TIC 21, chloroplastic (296 aa).

The transit peptide at 1–90 (MQSLLLPPAS…VAFSYPTSPS (90 aa)) directs the protein to the chloroplast. 4 helical membrane-spanning segments follow: residues 125–145 (FWGQ…SIVV), 156–176 (YATA…FGYI), 208–228 (VNIL…GFLV), and 250–270 (VLAL…SHFL).

As to quaternary structure, homomultimer. Part of the translocon complex. Ubiquitous. Highest expression in green tissues and very low levels in mature pollen.

Its subcellular location is the plastid. The protein localises to the chloroplast inner membrane. In terms of biological role, involved in chloroplast protein import across the inner envelope membrane. Also acts as a chloroplast permease regulating the iron transport and homeostasis. Involved in the uptake and sequestration of iron in plastids. The chain is Protein TIC 21, chloroplastic (TIC21) from Arabidopsis thaliana (Mouse-ear cress).